Here is a 282-residue protein sequence, read N- to C-terminus: ATP phosphoribosyltransferase (282 aa).

Belongs to the ATP phosphoribosyltransferase family. Long subfamily. Mg(2+) serves as cofactor.

Its subcellular location is the cytoplasm. The catalysed reaction is 1-(5-phospho-beta-D-ribosyl)-ATP + diphosphate = 5-phospho-alpha-D-ribose 1-diphosphate + ATP. Its pathway is amino-acid biosynthesis; L-histidine biosynthesis; L-histidine from 5-phospho-alpha-D-ribose 1-diphosphate: step 1/9. Its activity is regulated as follows. Feedback inhibited by histidine. Its function is as follows. Catalyzes the condensation of ATP and 5-phosphoribose 1-diphosphate to form N'-(5'-phosphoribosyl)-ATP (PR-ATP). Has a crucial role in the pathway because the rate of histidine biosynthesis seems to be controlled primarily by regulation of HisG enzymatic activity. The polypeptide is ATP phosphoribosyltransferase (Pyrobaculum calidifontis (strain DSM 21063 / JCM 11548 / VA1)).